Reading from the N-terminus, the 810-residue chain is Fibroblast growth factor receptor 1-A (810 aa).

Residues 1–26 (MKMMMIMKTTLLLISVLLTQALQSQG) form the signal peptide. The Extracellular segment spans residues 27–363 (RPAIQDEAPA…TQLPNQTYLE (337 aa)). 3 Ig-like C2-type domains span residues 28–115 (PAIQ…FNIS), 147–235 (PDKM…YQLD), and 244–346 (PILQ…AWLT). C53 and C99 are disulfide-bonded. N-linked (GlcNAc...) asparagine glycosylation is found at N107, N113, N216, N229, N253, N285, N306, N319, and N358. A disulfide bridge connects residues C167 and C219. C266 and C330 form a disulfide bridge. The chain crosses the membrane as a helical span at residues 364 to 384 (VLIYCVGFFLICVMVGTAVLA). At 385–810 (KMHSSAKKSD…PNRGVAFKKR (426 aa)) the chain is on the cytoplasmic side. Position 450 is a phosphotyrosine; by autocatalysis (Y450). The 290-residue stretch at 465 to 754 (LVLGKPLGEG…LSMTSNQEYL (290 aa)) folds into the Protein kinase domain. ATP contacts are provided by residues 471–477 (LGEGCFG), K501, 549–551 (EFA), and N555. Phosphotyrosine; by autocatalysis is present on residues Y570 and Y572. D610 acts as the Proton acceptor in catalysis. Residues R614 and D628 each contribute to the ATP site. Y640, Y641, Y717, and Y753 each carry phosphotyrosine; by autocatalysis. Residues 787–810 (AGADEPCLPKFPPHPNRGVAFKKR) are disordered.

The protein belongs to the protein kinase superfamily. Tyr protein kinase family. Fibroblast growth factor receptor subfamily. In terms of assembly, monomer. Homodimer after ligand binding. Interacts with cnpy1. Autophosphorylated. Binding of FGF family members together with heparan sulfate proteoglycan or heparin promotes receptor dimerization and autophosphorylation on tyrosine residues. Autophosphorylation occurs in trans between the two FGFR molecules present in the dimer and proceeds in a highly ordered manner. Phosphotyrosine residues provide docking sites for interacting proteins and so are crucial for FGFR1 function and its regulation. Post-translationally, ubiquitinated. FGFR1 is rapidly ubiquitinated after autophosphorylation, leading to internalization and degradation. In terms of processing, N-glycosylated in the endoplasmic reticulum. The N-glycan chains undergo further maturation to an Endo H-resistant form in the Golgi apparatus. As to expression, initially expressed in adaxial mesoderm with transcripts distinctly localized to the anterior portion of each half-somite. Hereupon, also strongly expressed in the otic vesicles, branchial arches and the brain, especially at the midbrain-hindbrain boundary (MHB).

Its subcellular location is the cell membrane. The protein localises to the nucleus. It is found in the cytoplasm. It localises to the cytosol. The protein resides in the cytoplasmic vesicle. It catalyses the reaction L-tyrosyl-[protein] + ATP = O-phospho-L-tyrosyl-[protein] + ADP + H(+). Its activity is regulated as follows. Present in an inactive conformation in the absence of bound ligand. Ligand binding leads to dimerization and activation by sequential autophosphorylation on tyrosine residues. Its function is as follows. Tyrosine-protein kinase that acts as a cell-surface receptor for fibroblast growth factors and plays an essential role in the regulation of embryonic development, cell proliferation, differentiation and migration. Required for normal mesoderm patterning and normal skeletogenesis. Phosphorylates PLCG1, FRS2, GAB1 and SHB. Ligand binding leads to the activation of several signaling cascades. Activation of PLCG1 leads to the production of the cellular signaling molecules diacylglycerol and inositol-1,4,5-trisphosphate. Phosphorylation of FRS2 triggers recruitment of GRB2, GAB1, PIK3R1 and SOS1, and mediates activation of RAS, MAPK1/ERK2, MAPK3/ERK1 and the MAP kinase signaling pathway, as well as of the AKT1 signaling pathway. Promotes phosphorylation of SHC1, STAT1 and PTPN11/SHP2. In the nucleus, enhances RPS6KA1 and CREB1 activity and contributes to the regulation of transcription. FGFR1 signaling is down-regulated by ubiquitination, internalization and degradation. The protein is Fibroblast growth factor receptor 1-A (fgfr1a) of Danio rerio (Zebrafish).